A 4134-amino-acid polypeptide reads, in one-letter code: DNA-dependent protein kinase catalytic subunit (4134 aa).

HEAT repeat units follow at residues 900–937 (VIYLDVFLPRVTDLALSASDRQTKIAACELLHSIVAYM), 1000–1036 (QDTVTFLEAILSGIVDPVDSTLRDFCGQCVREFLKWS), and 1050–1085 (ANTKSLFKRLYSLALHPSAFKRLGAALAFNSIYREF). TPR repeat units lie at residues 1265–1305 (YNTF…HDIH) and 1722–1755 (PMSSDEFPKGTLKHNNYVDCTKKFLDALELSQSP). Ser2055 carries the phosphoserine; by autocatalysis modification. The stretch at 2207–2240 (DEILANRLLEFLMKNAFHQKRAVFRHNLEIIKTV) is one TPR 3 repeat. Residue Thr2609 is modified to Phosphothreonine; by autocatalysis. Over residues 2611 to 2629 (ASQSTNRNSSQERSLSISG) the composition is skewed to polar residues. The tract at residues 2611–2631 (ASQSTNRNSSQERSLSISGSV) is disordered. A Phosphoserine; by autocatalysis modification is found at Ser2612. Phosphothreonine; by autocatalysis is present on residues Thr2638 and Thr2647. Positions 2880–3545 (NVSTSCLASL…IYPFTISSES (666 aa)) constitute an FAT domain. A PI3K/PI4K catalytic domain is found at 3728 to 4059 (FDERIMVLES…VSYVKRKLTG (332 aa)). The tract at residues 3734–3740 (VLESLRK) is G-loop. The interval 3925 to 3933 (GIGDRHLSN) is catalytic loop. An activation loop region spans residues 3945-3970 (GIDFGHAFGSATQFLPVPELMPFRLT). Residues 4102–4134 (DRLSEETQVRCLIDQATDPNLLGRVWEGWEPWM) enclose the FATC domain.

Belongs to the PI3/PI4-kinase family. As to quaternary structure, DNA-PK is a heterotrimer of PRKDC and the Ku dimer (composed of XRCC6/Ku70 and XRCC5/Ku86). Component of the core long-range non-homologous end joining (NHEJ) complex (also named DNA-PK complex) composed of PRKDC, LIG4, XRCC4, XRCC6/Ku70, XRCC5/Ku86 and NHEJ1/XLF. Additional component of the NHEJ complex includes PAXX. Following autophosphorylation, PRKDC dissociates from DNA. Autophosphorylated at two clusters, the T2609 cluster and the S2056 cluster. Autophosphorylated on Ser-2055, Thr-2609, Thr-2638 and Thr-2647. Ser-2055 and Thr-2609 are DNA damage-inducible phosphorylation sites (inducible with ionizing radiation, IR) dephosphorylated by PPP5C. Autophosphorylation induces a conformational change that leads to remodeling of the DNA-PK complex, requisite for efficient end processing and DNA repair. Autophosphorylation in trans within DNA-PK complexes loaded on DNA ends leads to the dissociation of PRKDC from DNA and the transition into the short-range NHEJ complex. Autophosphorylation of the T2609 cluster is required for hematopoietic development and protein synthesis in erythrocytes precursors.

It is found in the nucleus. Its subcellular location is the nucleolus. It carries out the reaction L-seryl-[protein] + ATP = O-phospho-L-seryl-[protein] + ADP + H(+). The catalysed reaction is L-threonyl-[protein] + ATP = O-phospho-L-threonyl-[protein] + ADP + H(+). Functionally, serine/threonine-protein kinase that acts as a molecular sensor for DNA damage. Involved in DNA nonhomologous end joining (NHEJ) required for double-strand break (DSB) repair and V(D)J recombination. Must be bound to DNA to express its catalytic properties. Promotes processing of hairpin DNA structures in V(D)J recombination by activation of the hairpin endonuclease artemis (DCLRE1C). Recruited by XRCC5 and XRCC6 to DNA ends and is required to (1) protect and align broken ends of DNA, thereby preventing their degradation, (2) and sequester the DSB for repair by NHEJ. Acts as a scaffold protein to aid the localization of DNA repair proteins to the site of damage. The assembly of the DNA-PK complex at DNA ends is also required for the NHEJ ligation step. Found at the ends of chromosomes, suggesting a further role in the maintenance of telomeric stability and the prevention of chromosomal end fusion. As part of the DNA-PK complex, involved in the early steps of ribosome assembly by promoting the processing of precursor rRNA into mature 18S rRNA in the small-subunit processome. Recognizes the substrate consensus sequence [ST]-Q. Phosphorylates 'Ser-139' of histone variant H2AX, thereby regulating DNA damage response mechanism. This Gallus gallus (Chicken) protein is DNA-dependent protein kinase catalytic subunit (PRKDC).